The primary structure comprises 336 residues: Flavonoid 4'-O-methyltransferase 5 (336 aa).

Y140 and D203 together coordinate S-adenosyl-L-methionine. H241 acts as the Proton acceptor in catalysis.

This sequence belongs to the class I-like SAM-binding methyltransferase superfamily. Cation-independent O-methyltransferase family. In terms of assembly, homodimer. As to expression, expressed in leaves.

It carries out the reaction genkwanin + S-adenosyl-L-methionine = apigenin 4',7-dimethyl ether + S-adenosyl-L-homocysteine. The enzyme catalyses cirsiliol + S-adenosyl-L-methionine = eupatorin + S-adenosyl-L-homocysteine + H(+). The catalysed reaction is cirsimaritin + S-adenosyl-L-methionine = salvigenin + S-adenosyl-L-homocysteine + H(+). It catalyses the reaction scutellarein 7-methyl ether + S-adenosyl-L-methionine = ladanein + S-adenosyl-L-homocysteine + H(+). It carries out the reaction (2S)-sakuranetin + S-adenosyl-L-methionine = (2S)-naringenin 4',7-dimethyl ether + S-adenosyl-L-homocysteine + H(+). Its pathway is flavonoid metabolism. Substrate inhibition by genkwanin (GENK) at concentrations above 10 mM. Its function is as follows. Flavonoid 4'-O-methyltransferase involved in the biosynthesis of polymethoxylated flavonoids natural products such as nevadensin and salvigenin, aroma compounds which contribute to the flavor of sweet basil, and exhibit pharmacological activities such as anti-allergic, anti-oxidant, antibacterial, anti-proliferative, and anti-inflammatory effects. Catalyzes S-adenosylmethionine-dependent regioselective 4'-O-methylation of flavonoids; active on various hydroxylated flavonoid substrates, including scutellarein-7-methyl ether (SCU7Me) and, with a lower efficiency, cirsimaritin (CIRM), sakuranetin (NAR7Me), ladanein (LAD) and genkwanin (GENK). This Ocimum basilicum (Sweet basil) protein is Flavonoid 4'-O-methyltransferase 5.